Reading from the N-terminus, the 225-residue chain is mRNA-decapping protein D10 (225 aa).

The region spanning alanine 35–valine 218 is the Nudix hydrolase domain. The Nudix box motif lies at glycine 116–asparagine 137. Glutamate 122 lines the Mg(2+) pocket. The active-site Nucleophile is the glutamate 131. Glutamate 135 contributes to the Mn(2+) binding site. Aspartate 157 contacts Mg(2+).

Belongs to the Nudix hydrolase family. Mg(2+) is required as a cofactor. Requires Mn(2+) as cofactor.

In terms of biological role, decapping enzyme required for the removal of the 5'-end m7GpppN cap tethered to viral and host mRNAs to allow their decay in cells. May therefore accelerate viral and cellular mRNA turnover to eliminate competing host mRNAs and allow stage-specific synthesis of viral proteins. Acceleration of the turnover of cellular transcripts may even promote the shutoff of host protein synthesis. This Fowlpox virus (strain NVSL) (FPV) protein is mRNA-decapping protein D10.